A 512-amino-acid polypeptide reads, in one-letter code: Cytochrome P450 monooxygenase paxQ (512 aa).

A run of 2 helical transmembrane segments spans residues 3–23 and 35–55; these read FVLS…LVSI and LQIP…ISAL. Position 453 (Cys453) interacts with heme.

Belongs to the cytochrome P450 family. Heme serves as cofactor.

Its subcellular location is the membrane. It participates in secondary metabolite biosynthesis. Functionally, cytochrome P450 monooxygenase; part of the gene cluster that mediates the biosynthesis of paxilline, a mycotoxin that acts as an inhibitor of mammalian maxi-K channels. PaxG, the geranylgeranyl diphosphate (GGPP) synthase is proposed to catalyze the first step in paxilline biosynthesis. Condensation of indole-3-glycerol phosphate with GGPP by paxC then forms 3-geranylgeranylindole (3-GGI), followed by epoxidation and cyclization of this intermediate (by paxM and paxB) to form paspaline. Paspaline is subsequently converted to 13-desoxypaxilline by paxP, the latter being then converted to paxilline by paxQ. Finally paxilline can be mono- and di-prenylated by paxD. PaxQ can also utilized beta-paxitriol and alpha-PC-M6 as substrates converting them to alpha-paxitriol. This is Cytochrome P450 monooxygenase paxQ from Penicillium paxilli.